A 371-amino-acid polypeptide reads, in one-letter code: MQQKCYYEILNISKTASGVEIKRAYRKLAMKYHPDRNPGDKEAEIKFKEISEAYEILSDDSKRSRYDQFGHAGVNQQSGFGGTGGFEDIFDTFFGGGTSRGSNRSRASRGSDLEYTLEITLEEAFFGVEKEITIPRMESCDSCDGTGSKSRSKTTCHACHGQGTIRRQQGFFAFEQTCPVCNGTGYSITDPCDACYGNGKVKKQKTLKVKIPEGVDNGDRIRLQGEGDSGSNGAMNGDLYVQIIIKEHKIFERRDINLYCEMPISFTKACLGGDIKVPTLDGEVVLKVVPETQTGKVFRLREKGMKSLRGHRRGDLLCKVVVETPVNLSAEQKELLEKFADSLGEDYQSKHAPKSKTWFDNVKDYAKKFFE.

The J domain maps to cysteine 5 to glycine 70. The CR-type zinc finger occupies glycine 127–glutamine 204. Zn(2+)-binding residues include cysteine 140, cysteine 143, cysteine 156, cysteine 159, cysteine 178, cysteine 181, cysteine 192, and cysteine 195. CXXCXGXG motif repeat units follow at residues cysteine 140–glycine 147, cysteine 156–glycine 163, cysteine 178–glycine 185, and cysteine 192–glycine 199.

The protein belongs to the DnaJ family. Homodimer. Zn(2+) is required as a cofactor.

The protein localises to the cytoplasm. In terms of biological role, participates actively in the response to hyperosmotic and heat shock by preventing the aggregation of stress-denatured proteins and by disaggregating proteins, also in an autonomous, DnaK-independent fashion. Unfolded proteins bind initially to DnaJ; upon interaction with the DnaJ-bound protein, DnaK hydrolyzes its bound ATP, resulting in the formation of a stable complex. GrpE releases ADP from DnaK; ATP binding to DnaK triggers the release of the substrate protein, thus completing the reaction cycle. Several rounds of ATP-dependent interactions between DnaJ, DnaK and GrpE are required for fully efficient folding. Also involved, together with DnaK and GrpE, in the DNA replication of plasmids through activation of initiation proteins. The protein is Chaperone protein DnaJ of Francisella tularensis subsp. holarctica (strain LVS).